A 163-amino-acid chain; its full sequence is SsrA-binding protein (163 aa).

Belongs to the SmpB family.

The protein resides in the cytoplasm. Its function is as follows. Required for rescue of stalled ribosomes mediated by trans-translation. Binds to transfer-messenger RNA (tmRNA), required for stable association of tmRNA with ribosomes. tmRNA and SmpB together mimic tRNA shape, replacing the anticodon stem-loop with SmpB. tmRNA is encoded by the ssrA gene; the 2 termini fold to resemble tRNA(Ala) and it encodes a 'tag peptide', a short internal open reading frame. During trans-translation Ala-aminoacylated tmRNA acts like a tRNA, entering the A-site of stalled ribosomes, displacing the stalled mRNA. The ribosome then switches to translate the ORF on the tmRNA; the nascent peptide is terminated with the 'tag peptide' encoded by the tmRNA and targeted for degradation. The ribosome is freed to recommence translation, which seems to be the essential function of trans-translation. The chain is SsrA-binding protein from Shewanella putrefaciens (strain CN-32 / ATCC BAA-453).